We begin with the raw amino-acid sequence, 548 residues long: Chaperonin GroEL (548 aa).

ATP-binding positions include 29–32 (TLGP), lysine 50, 86–90 (DGTTT), glycine 413, 479–481 (NAA), and aspartate 496.

The protein belongs to the chaperonin (HSP60) family. In terms of assembly, forms a cylinder of 14 subunits composed of two heptameric rings stacked back-to-back. Interacts with the co-chaperonin GroES.

The protein resides in the cytoplasm. The enzyme catalyses ATP + H2O + a folded polypeptide = ADP + phosphate + an unfolded polypeptide.. Together with its co-chaperonin GroES, plays an essential role in assisting protein folding. The GroEL-GroES system forms a nano-cage that allows encapsulation of the non-native substrate proteins and provides a physical environment optimized to promote and accelerate protein folding. This Deinococcus radiodurans (strain ATCC 13939 / DSM 20539 / JCM 16871 / CCUG 27074 / LMG 4051 / NBRC 15346 / NCIMB 9279 / VKM B-1422 / R1) protein is Chaperonin GroEL.